The following is a 188-amino-acid chain: PRA1 family protein 3 (188 aa).

The residue at position 1 (Met1) is an N-acetylmethionine. Over 1–35 (MDVNIAPLRAWDDFFPGSDRFAQPDFRDISKWNNR) the chain is Cytoplasmic. Helical transmembrane passes span 36 to 56 (VVSN…MMIS) and 57 to 77 (VVGF…VLVF). Topologically, residues 78–93 (TGFVWAAHNKDALRRL) are cytoplasmic. A run of 2 helical transmembrane segments spans residues 94-114 (KKRY…FLIS) and 115-135 (MFGG…LMFI). The segment at 103-117 (MVVMLASYFLISMFG) is required for homodimer formation and heterodimer formation with ARL6IP1. Topologically, residues 136–188 (HASLRLRNLKNKLENKMEGIGLKRTPMGIVLDALEQQEEGINRLTDYISKVKE) are cytoplasmic. The segment at 136–188 (HASLRLRNLKNKLENKMEGIGLKRTPMGIVLDALEQQEEGINRLTDYISKVKE) is targeting to endoplasmic reticulum membrane.

This sequence belongs to the PRA1 family. As to quaternary structure, homodimer. Heterodimer with ARL6IP1. Forms multimers. Interacts with ARL6. Interacts with prenylated RAB1A and RAB3A. Interacts with SLC1A1/EAAC1. Interacts with RTN2 (via first transmembrane domain). Does not interact with VAMP1, VAMP2 or VAMP3.

The protein localises to the endoplasmic reticulum membrane. Its subcellular location is the cell membrane. It is found in the cytoplasm. It localises to the cytoskeleton. Regulates intracellular concentrations of taurine and glutamate. Negatively modulates SLC1A1/EAAC1 glutamate transport activity by decreasing its affinity for glutamate in a PKC activity-dependent manner. Plays a role in the retention of SLC1A1/EAAC1 in the endoplasmic reticulum. This is PRA1 family protein 3 (ARL6IP5) from Macaca fascicularis (Crab-eating macaque).